Here is an 89-residue protein sequence, read N- to C-terminus: Putative ankyrin repeat protein RF_1157 (89 aa).

The ANK repeat unit spans residues 2–32; sequence YNTTPLNFAINQENNEEVIKYLLANGANPRL.

The chain is Putative ankyrin repeat protein RF_1157 from Rickettsia felis (strain ATCC VR-1525 / URRWXCal2) (Rickettsia azadi).